Reading from the N-terminus, the 177-residue chain is Inorganic pyrophosphatase (177 aa).

Substrate-binding residues include lysine 31, arginine 45, and tyrosine 57. Aspartate 67, aspartate 72, and aspartate 104 together coordinate Mg(2+). Residue tyrosine 141 participates in substrate binding.

This sequence belongs to the PPase family. As to quaternary structure, homohexamer. Also forms homotrimers, but the trimeric form is 23% less active than the hexamer. In fact, likely forms a dimer of trimers. The cofactor is Mg(2+).

It localises to the cytoplasm. It catalyses the reaction diphosphate + H2O = 2 phosphate + H(+). Its activity is regulated as follows. Inhibited by sodium fluoride (NaF) in vitro, similarly to other class A type inorganic pyrophosphatases. Functionally, catalyzes the hydrolysis of inorganic pyrophosphate (PPi) forming two phosphate ions. The hydrolysis of PPi by inorganic pyrophosphatase releases a considerable amount of energy that can drive unfavorable biochemical transformations to completion. Is not active on nucleoside triphosphates (ATP, TTP, GTP, or CTP) or nucleoside diphosphate (ADP). The polypeptide is Inorganic pyrophosphatase (Haloferax volcanii (strain ATCC 29605 / DSM 3757 / JCM 8879 / NBRC 14742 / NCIMB 2012 / VKM B-1768 / DS2) (Halobacterium volcanii)).